Reading from the N-terminus, the 1138-residue chain is Ras guanine nucleotide exchange factor N (1138 aa).

LRR repeat units follow at residues 1 to 16 (MSYN…ITQL), 18 to 39 (HLKS…SYFG), and 43 to 64 (TLQK…FYLL). 7 disordered regions span residues 126-180 (ALKN…SNNN), 239-301 (FNSE…GSRK), 319-360 (NKTH…SDTN), 389-411 (IDSP…SPPQ), 473-540 (GSPT…NNNN), 601-643 (ATTV…TSGS), and 660-680 (MSDV…SQSG). Residues 140 to 158 (KTKGLHSSSSNINTSNNIT) are compositionally biased toward low complexity. A compositionally biased stretch (polar residues) spans 263-275 (RAQTISGKQPSII). Over residues 283–299 (SGGGSGNNNNSGGGGGS) the composition is skewed to gly residues. The span at 326–352 (GHSSSSQSNSTTNTPSISSTPYPTSTI) shows a compositional bias: low complexity. Basic and acidic residues predominate over residues 393–405 (RTLERRNSSRDDI). A compositionally biased stretch (pro residues) spans 487–496 (PQHPPPPPPI). Residues 498-511 (DNNQPKLNQSQNLI) are compositionally biased toward polar residues. Low complexity-rich tracts occupy residues 512–540 (NTNS…NNNN) and 605–634 (NSNS…NSPQ). The 123-residue stretch at 733–855 (GVPKVKNITL…LLLNIINMKR (123 aa)) folds into the N-terminal Ras-GEF domain. Positions 891–1118 (RPHEIARQLT…YSEASKIEEK (228 aa)) constitute a Ras-GEF domain.

Its function is as follows. Promotes the exchange of Ras-bound GDP by GTP. May play a role in chemotaxis. The polypeptide is Ras guanine nucleotide exchange factor N (gefN) (Dictyostelium discoideum (Social amoeba)).